A 24-amino-acid polypeptide reads, in one-letter code: Ranatuerin-4 (24 aa).

Cysteines 18 and 24 form a disulfide.

This sequence belongs to the frog skin active peptide (FSAP) family. Ranatuerin subfamily. Expressed by the skin glands.

The protein localises to the secreted. Its function is as follows. Antibacterial activity against Gram-positive bacterium S.aureus (MIC=55 uM). Shows no detectable hemolytic activity towards human erythrocytes. The chain is Ranatuerin-4 from Aquarana catesbeiana (American bullfrog).